A 406-amino-acid polypeptide reads, in one-letter code: Endoglucanase 1 (406 aa).

The first 43 residues, 1-43, serve as a signal peptide directing secretion; that stretch reads MNSKKIGAMIAAAVLSLIVMTPAATRKIVQRQTRNSSTAVENS. 2 stretches are compositionally biased toward polar residues: residues 30–41 and 51–62; these read QRQTRNSSTAVE and ENVPVSQTHTND. The disordered stretch occupies residues 30 to 62; it reads QRQTRNSSTAVENSAADESETENVPVSQTHTND. The active-site Proton donor is Glu-210. Catalysis depends on Glu-330, which acts as the Nucleophile.

It belongs to the glycosyl hydrolase 5 (cellulase A) family.

It catalyses the reaction Endohydrolysis of (1-&gt;4)-beta-D-glucosidic linkages in cellulose, lichenin and cereal beta-D-glucans.. The protein is Endoglucanase 1 (Eg I) of Ruminococcus albus.